Consider the following 729-residue polypeptide: Fatty acid oxidation complex subunit alpha (729 aa).

Residues 1–189 (MLYKGDTLYV…KIGLIDGIVK (189 aa)) form an enoyl-CoA hydratase/isomerase region. Aspartate 296 is a substrate binding site. The 3-hydroxyacyl-CoA dehydrogenase stretch occupies residues 311–729 (EMPKQAAVLG…ARPVGALKTA (419 aa)). NAD(+) is bound by residues methionine 324, aspartate 343, 400–402 (VVE), lysine 407, and serine 429. Histidine 450 serves as the catalytic For 3-hydroxyacyl-CoA dehydrogenase activity. Asparagine 453 contributes to the NAD(+) binding site. Residues asparagine 500 and tyrosine 660 each contribute to the substrate site. The disordered stretch occupies residues 708–729 (RHNEPYYPPVEPARPVGALKTA).

The protein in the N-terminal section; belongs to the enoyl-CoA hydratase/isomerase family. In the C-terminal section; belongs to the 3-hydroxyacyl-CoA dehydrogenase family. As to quaternary structure, heterotetramer of two alpha chains (FadB) and two beta chains (FadA).

The enzyme catalyses a (3S)-3-hydroxyacyl-CoA + NAD(+) = a 3-oxoacyl-CoA + NADH + H(+). It catalyses the reaction a (3S)-3-hydroxyacyl-CoA = a (2E)-enoyl-CoA + H2O. The catalysed reaction is a 4-saturated-(3S)-3-hydroxyacyl-CoA = a (3E)-enoyl-CoA + H2O. It carries out the reaction (3S)-3-hydroxybutanoyl-CoA = (3R)-3-hydroxybutanoyl-CoA. The enzyme catalyses a (3Z)-enoyl-CoA = a 4-saturated (2E)-enoyl-CoA. It catalyses the reaction a (3E)-enoyl-CoA = a 4-saturated (2E)-enoyl-CoA. It participates in lipid metabolism; fatty acid beta-oxidation. Its function is as follows. Involved in the aerobic and anaerobic degradation of long-chain fatty acids via beta-oxidation cycle. Catalyzes the formation of 3-oxoacyl-CoA from enoyl-CoA via L-3-hydroxyacyl-CoA. It can also use D-3-hydroxyacyl-CoA and cis-3-enoyl-CoA as substrate. This is Fatty acid oxidation complex subunit alpha from Enterobacter sp. (strain 638).